A 155-amino-acid polypeptide reads, in one-letter code: Ribosome maturation factor RimP (155 aa).

This sequence belongs to the RimP family.

Its subcellular location is the cytoplasm. Required for maturation of 30S ribosomal subunits. The protein is Ribosome maturation factor RimP of Staphylococcus aureus (strain bovine RF122 / ET3-1).